The sequence spans 552 residues: Dihydroxy-acid dehydratase (552 aa).

Asp-78 is a binding site for Mg(2+). Cys-119 serves as a coordination point for [2Fe-2S] cluster. 2 residues coordinate Mg(2+): Asp-120 and Lys-121. At Lys-121 the chain carries N6-carboxylysine. Cys-191 is a binding site for [2Fe-2S] cluster. Residue Glu-442 participates in Mg(2+) binding. Ser-468 (proton acceptor) is an active-site residue.

This sequence belongs to the IlvD/Edd family. Homodimer. Requires [2Fe-2S] cluster as cofactor. It depends on Mg(2+) as a cofactor.

It catalyses the reaction (2R)-2,3-dihydroxy-3-methylbutanoate = 3-methyl-2-oxobutanoate + H2O. The catalysed reaction is (2R,3R)-2,3-dihydroxy-3-methylpentanoate = (S)-3-methyl-2-oxopentanoate + H2O. The protein operates within amino-acid biosynthesis; L-isoleucine biosynthesis; L-isoleucine from 2-oxobutanoate: step 3/4. It functions in the pathway amino-acid biosynthesis; L-valine biosynthesis; L-valine from pyruvate: step 3/4. Functions in the biosynthesis of branched-chain amino acids. Catalyzes the dehydration of (2R,3R)-2,3-dihydroxy-3-methylpentanoate (2,3-dihydroxy-3-methylvalerate) into 2-oxo-3-methylpentanoate (2-oxo-3-methylvalerate) and of (2R)-2,3-dihydroxy-3-methylbutanoate (2,3-dihydroxyisovalerate) into 2-oxo-3-methylbutanoate (2-oxoisovalerate), the penultimate precursor to L-isoleucine and L-valine, respectively. This Caldicellulosiruptor saccharolyticus (strain ATCC 43494 / DSM 8903 / Tp8T 6331) protein is Dihydroxy-acid dehydratase.